The primary structure comprises 328 residues: Gonadotropin-releasing hormone receptor (328 aa).

Residues 1–38 (MANSASPEQNQNHCSAINSSILLTQGNLPTLTLSGKIR) are Extracellular-facing. N-linked (GlcNAc...) asparagine glycosylation occurs at N18. A helical transmembrane segment spans residues 39 to 58 (VTVTFFLFLLSTAFNASFLL). At 59 to 77 (KLQKWTQRKEKGKKLSRMK) the chain is on the cytoplasmic side. Residues 78 to 97 (VLLKHLTLANLLETLIVMPL) traverse the membrane as a helical segment. At 98–115 (DGMWNITVQWYAGEFLCK) the chain is on the extracellular side. N102 is a glycosylation site (N-linked (GlcNAc...) asparagine). A disulfide bridge connects residues C114 and C196. Residues 116 to 137 (VLSYLKLFSMYAPAFMMVVISL) form a helical membrane-spanning segment. Residues 138–164 (DRSLAITRPLAVKSNSRLGRFMIGLAW) lie on the Cytoplasmic side of the membrane. A helical transmembrane segment spans residues 165–184 (LLSSIFAGPQLYIFRMIHLA). The Extracellular segment spans residues 185–212 (DSSGQTEGFSQCVTHGSFPQWWHQAFYN). The chain crosses the membrane as a helical span at residues 213-232 (FFTFSCLFIIPLLIMLICNA). Residues 233–281 (KIMFTLTRVLQQDPHNLQLNQSKNNIPRARLRTLKMTVAFAASFIVCWT) are Cytoplasmic-facing. A helical membrane pass occupies residues 282 to 300 (PYYVLGIWYWFDPEMVNRV). Residues 301–306 (SDPVNH) lie on the Extracellular side of the membrane. Residues 307 to 326 (FFFLFAFLNPCFDPLIYGYF) form a helical membrane-spanning segment. Residues 327–328 (SL) are Cytoplasmic-facing.

It belongs to the G-protein coupled receptor 1 family. In terms of tissue distribution, pituitary gland.

Its subcellular location is the cell membrane. Receptor for gonadotropin releasing hormone (GnRH) that mediates the action of GnRH to stimulate the secretion of the gonadotropic hormones luteinizing hormone (LH) and follicle-stimulating hormone (FSH). This receptor mediates its action by association with G-proteins that activate a phosphatidylinositol-calcium second messenger system. The sequence is that of Gonadotropin-releasing hormone receptor (GNRHR) from Sus scrofa (Pig).